A 375-amino-acid polypeptide reads, in one-letter code: Queuine tRNA-ribosyltransferase (375 aa).

The active-site Proton acceptor is D94. Residues 94 to 98 (DSGGF), D148, Q191, and G218 each bind substrate. The tract at residues 249–255 (GVGSPDD) is RNA binding. Catalysis depends on D268, which acts as the Nucleophile. Positions 273-277 (TRIAR) are RNA binding; important for wobble base 34 recognition. Residues C306, C308, C311, and H337 each coordinate Zn(2+).

The protein belongs to the queuine tRNA-ribosyltransferase family. Homodimer. Within each dimer, one monomer is responsible for RNA recognition and catalysis, while the other monomer binds to the replacement base PreQ1. It depends on Zn(2+) as a cofactor.

It carries out the reaction 7-aminomethyl-7-carbaguanine + guanosine(34) in tRNA = 7-aminomethyl-7-carbaguanosine(34) in tRNA + guanine. It participates in tRNA modification; tRNA-queuosine biosynthesis. Its function is as follows. Catalyzes the base-exchange of a guanine (G) residue with the queuine precursor 7-aminomethyl-7-deazaguanine (PreQ1) at position 34 (anticodon wobble position) in tRNAs with GU(N) anticodons (tRNA-Asp, -Asn, -His and -Tyr). Catalysis occurs through a double-displacement mechanism. The nucleophile active site attacks the C1' of nucleotide 34 to detach the guanine base from the RNA, forming a covalent enzyme-RNA intermediate. The proton acceptor active site deprotonates the incoming PreQ1, allowing a nucleophilic attack on the C1' of the ribose to form the product. After dissociation, two additional enzymatic reactions on the tRNA convert PreQ1 to queuine (Q), resulting in the hypermodified nucleoside queuosine (7-(((4,5-cis-dihydroxy-2-cyclopenten-1-yl)amino)methyl)-7-deazaguanosine). The chain is Queuine tRNA-ribosyltransferase from Thermoanaerobacter sp. (strain X514).